The following is a 91-amino-acid chain: Large ribosomal subunit protein bL27 (91 aa).

The interval 1–22 (MAHKKAGGSSRNGRDSAGRRLG) is disordered.

The protein belongs to the bacterial ribosomal protein bL27 family.

The sequence is that of Large ribosomal subunit protein bL27 from Methylocella silvestris (strain DSM 15510 / CIP 108128 / LMG 27833 / NCIMB 13906 / BL2).